Consider the following 569-residue polypeptide: Putative ABC transporter ATP-binding protein TTE1589 (569 aa).

2 consecutive ABC transporter domains span residues 8–248 (IIVK…IGLM) and 309–542 (IQAK…LSLK). ATP is bound by residues 43–50 (GPSGAGKS) and 342–349 (GHNGSGKT).

Belongs to the ABC transporter superfamily.

It localises to the cell membrane. Its function is as follows. Probably part of an ABC transporter complex. Responsible for energy coupling to the transport system. The polypeptide is Putative ABC transporter ATP-binding protein TTE1589 (Caldanaerobacter subterraneus subsp. tengcongensis (strain DSM 15242 / JCM 11007 / NBRC 100824 / MB4) (Thermoanaerobacter tengcongensis)).